Consider the following 142-residue polypeptide: Hemoglobin subunit theta-1 (142 aa).

Residues 2–142 (ALAAADRATV…VISALASDCR (141 aa)) enclose the Globin domain. Residues His59 and His88 each contribute to the heme b site.

The protein belongs to the globin family.

The sequence is that of Hemoglobin subunit theta-1 (HBQ1) from Equus caballus (Horse).